The following is a 551-amino-acid chain: Cu(2+) suppressing and bleomycin sensitive protein 1 (551 aa).

Coiled coils occupy residues 174–213 (REID…EEID) and 249–300 (NSLL…DSGK). Residues 513-551 (EEKAQNSTSSDGSDDDDNGESGIDSNSNDSEPESEYQQE) are disordered. Residues 532 to 541 (ESGIDSNSND) are compositionally biased toward low complexity. A compositionally biased stretch (acidic residues) spans 542-551 (SEPESEYQQE).

This sequence belongs to the CUB1 family. In terms of assembly, monomer. Phosphorylated by PKA in vitro.

It localises to the cytoplasm. The protein localises to the nucleus. Involved in bleomycin tolerance with links to DNA repair and/or proteasome function. In Saccharomyces cerevisiae (strain ATCC 204508 / S288c) (Baker's yeast), this protein is Cu(2+) suppressing and bleomycin sensitive protein 1 (CUB1).